We begin with the raw amino-acid sequence, 228 residues long: Mediator of RNA polymerase II transcription subunit 7-A (228 aa).

Belongs to the Mediator complex subunit 7 family. In terms of assembly, component of the Mediator complex.

Its subcellular location is the nucleus. Functionally, component of the Mediator complex, a coactivator involved in the regulated transcription of nearly all RNA polymerase II-dependent genes. Mediator functions as a bridge to convey information from gene-specific regulatory proteins to the basal RNA polymerase II transcription machinery. Mediator is recruited to promoters by direct interactions with regulatory proteins and serves as a scaffold for the assembly of a functional preinitiation complex with RNA polymerase II and the general transcription factors. This is Mediator of RNA polymerase II transcription subunit 7-A (med7-a) from Xenopus laevis (African clawed frog).